Here is a 323-residue protein sequence, read N- to C-terminus: Trihelix transcription factor GT-3a (323 aa).

Residues 1–20 (MDRRNPFQHHHHHHQLHHHL) are compositionally biased toward basic residues. Residues 1–51 (MDRRNPFQHHHHHHQLHHHLIQQQQLPPPPLSTTATMDPGGGGGGGERIPQ) form a disordered region. In terms of domain architecture, Myb-like spans 52–108 (WSIEETKELLAIREELDQTFMETKRNKLLWEVVAAKMADKGFVRSAEQCKSKWKNLV). Disordered stretches follow at residues 147-176 (EATE…EPNQ), 190-220 (KRET…GTKA), and 269-297 (ELEE…ARAQ). Acidic residues predominate over residues 164 to 176 (SDDEEEEVDEPNQ).

Homodimer. Heterodimer with GT-3B. As to expression, predominantly expressed in roots and flower buds.

It is found in the nucleus. Probable transcription factor that binds specifically to the core DNA sequence 5'-GTTAC-3'. The protein is Trihelix transcription factor GT-3a (GT-3A) of Arabidopsis thaliana (Mouse-ear cress).